The sequence spans 458 residues: Glutamate--tRNA ligase 2 (458 aa).

Positions 20–30 (PSPTGLIHVGN) match the 'HIGH' region motif. The 'KMSKS' region motif lies at 251-255 (GLSKR). Residue lysine 254 participates in ATP binding.

Belongs to the class-I aminoacyl-tRNA synthetase family. Glutamate--tRNA ligase type 1 subfamily. As to quaternary structure, monomer.

Its subcellular location is the cytoplasm. It catalyses the reaction tRNA(Glu) + L-glutamate + ATP = L-glutamyl-tRNA(Glu) + AMP + diphosphate. Functionally, catalyzes the attachment of glutamate to tRNA(Glu) in a two-step reaction: glutamate is first activated by ATP to form Glu-AMP and then transferred to the acceptor end of tRNA(Glu). The sequence is that of Glutamate--tRNA ligase 2 from Xanthobacter autotrophicus (strain ATCC BAA-1158 / Py2).